The following is a 585-amino-acid chain: A-type ATP synthase subunit A (585 aa).

Residues 192-211 (MRQEWPVREPRPTVEKKTPR) form a disordered region. Residues 196 to 211 (WPVREPRPTVEKKTPR) are compositionally biased toward basic and acidic residues. 237–244 (GPFGSGKT) is an ATP binding site.

The protein belongs to the ATPase alpha/beta chains family. In terms of assembly, has multiple subunits with at least A(3), B(3), C, D, E, F, H, I and proteolipid K(x).

It localises to the cell membrane. The enzyme catalyses ATP + H2O + 4 H(+)(in) = ADP + phosphate + 5 H(+)(out). Its function is as follows. Component of the A-type ATP synthase that produces ATP from ADP in the presence of a proton gradient across the membrane. The A chain is the catalytic subunit. The sequence is that of A-type ATP synthase subunit A from Haloquadratum walsbyi (strain DSM 16790 / HBSQ001).